The following is a 248-amino-acid chain: ATP synthase subunit a (248 aa).

Transmembrane regions (helical) follow at residues glycine 31–glycine 51, valine 90–phenylalanine 110, isoleucine 129–serine 149, valine 195–phenylalanine 215, and leucine 216–glutamate 236.

The protein belongs to the ATPase A chain family. As to quaternary structure, F-type ATPases have 2 components, CF(1) - the catalytic core - and CF(0) - the membrane proton channel. CF(1) has five subunits: alpha(3), beta(3), gamma(1), delta(1), epsilon(1). CF(0) has four main subunits: a, b, b' and c.

It localises to the cellular thylakoid membrane. In terms of biological role, key component of the proton channel; it plays a direct role in the translocation of protons across the membrane. The chain is ATP synthase subunit a from Synechococcus sp. (strain JA-3-3Ab) (Cyanobacteria bacterium Yellowstone A-Prime).